Here is a 79-residue protein sequence, read N- to C-terminus: Peptide Im-5 (79 aa).

Residues 1-23 (MKYRKQLLVLFFAYFLVVNESEA) form the signal peptide. Residues 49–79 (RALMKRDLQDRMDPYQRNLKLDRYLKQLALD) constitute a propeptide that is removed on maturation.

This sequence belongs to the non-disulfide-bridged peptide (NDBP) superfamily. Medium-length antimicrobial peptide (group 3) family. Expressed by the venom gland.

The protein localises to the secreted. The protein resides in the target cell membrane. In terms of biological role, antimicrobial peptide that may act by disrupting the integrity of the bacterial cell membrane. Has antibacterial activity against Gram-negative bacterium E.coli NBRC 3972 (MIC=10 uM) and against Gram-positive bacteria S.aureus NBRC 13276 (MIC=2.5-5 uM) and B.subtilis NBRC 3009 (MIC=0.5-1 uM). Also shows potent activity against antibiotic-sensitive and -resistant Acinetobacter baumannii (MIC=1.8-3.6 uM). Shows cytolytic activity against human and sheep erythrocytes. Toxic to cricket A.domestica. In Isometrus maculatus (Lesser brown scorpion), this protein is Peptide Im-5.